Here is a 224-residue protein sequence, read N- to C-terminus: MVILSNVSLFSCCNISQKPSLFSPSSRSSHCPIRCSQSQEGKEVVTSPLRSVVWSLGEEVSKRSLFALVSASLFFVDPALAFKGGGPYGQGVTRGQDLSGKDFSGQTLIRQDFKTSILRQANFKGAKLLGASFFDADLTGADLSEADLRGADFSLANVTKVNLTNANLEGATVTGNTSFKGSNITGADFTDVPLRDDQRVYLCKVADGVNATTGNATRDTLLCN.

The N-terminal 34 residues, 1–34 (MVILSNVSLFSCCNISQKPSLFSPSSRSSHCPIR), are a transit peptide targeting the chloroplast. The N-terminal 47 residues, 35–81 (CSQSQEGKEVVTSPLRSVVWSLGEEVSKRSLFALVSASLFFVDPALA), are a transit peptide targeting the thylakoid. Pentapeptide repeat domains are found at residues 116–155 (SILR…DFSL) and 156–196 (ANVT…PLRD).

It localises to the plastid. It is found in the chloroplast thylakoid lumen. This chain is Thylakoid lumenal 15 kDa protein 1, chloroplastic, found in Arabidopsis thaliana (Mouse-ear cress).